The sequence spans 1332 residues: DNA-directed RNA polymerase subunit beta'' (1332 aa).

Positions 220, 291, 298, and 301 each coordinate Zn(2+).

It belongs to the RNA polymerase beta' chain family. RpoC2 subfamily. As to quaternary structure, in plastids the minimal PEP RNA polymerase catalytic core is composed of four subunits: alpha, beta, beta', and beta''. When a (nuclear-encoded) sigma factor is associated with the core the holoenzyme is formed, which can initiate transcription. The cofactor is Zn(2+).

The protein localises to the plastid. It localises to the chloroplast. The catalysed reaction is RNA(n) + a ribonucleoside 5'-triphosphate = RNA(n+1) + diphosphate. Its function is as follows. DNA-dependent RNA polymerase catalyzes the transcription of DNA into RNA using the four ribonucleoside triphosphates as substrates. This chain is DNA-directed RNA polymerase subunit beta'', found in Lotus japonicus (Lotus corniculatus var. japonicus).